The following is a 1960-amino-acid chain: Intraflagellar transport protein 172 (1960 aa).

WD repeat units lie at residues 63-103 (SNKD…TDKK) and 328-367 (GFLP…YRYC). TPR repeat units lie at residues 1064-1098 (KADQ…QSYR), 1362-1395 (CDLF…QEIV), and 1397-1428 (MYLD…RSIR).

It belongs to the IFT172 family.

It localises to the cell projection. The protein localises to the cilium. The protein resides in the flagellum. It is found in the cytoplasm. Its subcellular location is the cytoskeleton. It localises to the flagellum axoneme. The protein localises to the flagellum basal body. Component of the intraflagellar transport complex B (IFT-B) involved in flagellar assembly. This Giardia intestinalis (strain ATCC 50803 / WB clone C6) (Giardia lamblia) protein is Intraflagellar transport protein 172.